The chain runs to 350 residues: Heme A synthase (350 aa).

Transmembrane regions (helical) follow at residues 16–36 (LARWLFVVAFMVVAIVAVGGI), 77–97 (FQLVNGPAGMTLATYKFIFFW), 101–121 (HRLLARTIGLVFAAPLAWFWI), 136–156 (LLALGALQGAVGWWMVKSGIV), 170–190 (LLVALFTLGGLVWTALDLVAL), 201–221 (GIGLLALAMLVLQLFYGALVA), 265–285 (VFLVHFIHRWWAWAVVAVLVV), and 299–321 (IVLHSVFGTQVLLGIFTVWSGVA). His-272 contacts heme. His-328 is a binding site for heme.

This sequence belongs to the COX15/CtaA family. Type 2 subfamily. Interacts with CtaB. It depends on heme b as a cofactor.

The protein resides in the cell membrane. It catalyses the reaction Fe(II)-heme o + 2 A + H2O = Fe(II)-heme a + 2 AH2. It participates in porphyrin-containing compound metabolism; heme A biosynthesis; heme A from heme O: step 1/1. Functionally, catalyzes the conversion of heme O to heme A by two successive hydroxylations of the methyl group at C8. The first hydroxylation forms heme I, the second hydroxylation results in an unstable dihydroxymethyl group, which spontaneously dehydrates, resulting in the formyl group of heme A. The chain is Heme A synthase from Novosphingobium aromaticivorans (strain ATCC 700278 / DSM 12444 / CCUG 56034 / CIP 105152 / NBRC 16084 / F199).